Reading from the N-terminus, the 803-residue chain is H(+)/Cl(-) exchange transporter 7 (803 aa).

The disordered stretch occupies residues 1–46 (MANVSKKVSWSGRDRDDEEGAPLLRRTGQPDEETPLLNGAGPGARQ). At 1 to 124 (MANVSKKVSW…TAFRTVEIKR (124 aa)) the chain is on the cytoplasmic side. At S9 the chain carries Phosphoserine. A run of 2 helical transmembrane segments spans residues 125-157 (WVIC…YRVI) and 172-195 (FSLL…VAFI). The short motif at 201 to 205 (GSGIP) is the Selectivity filter part_1 element. S202 is a binding site for chloride. The helical intramembrane region spans 204–211 (IPQIKCFL). 2 helical membrane passes run 221-239 (RLKT…VVGG) and 245-262 (EGPM…ISQG). A Selectivity filter part_2 motif is present at residues 243-247 (GKEGP). 2 consecutive intramembrane regions (helical) follow at residues 286-298 (FVSA…VSAA) and 302-310 (PVGGVLFSL). The next 5 membrane-spanning stretches (helical) occupy residues 320–339 (FLTW…LNFV), 373–403 (IPVF…FRIR), 408–430 (PCLQ…FVLI), 485–505 (PMTL…TYGL), and 510–533 (GVFI…MSYL). The Selectivity filter part_3 motif lies at 510–514 (GVFIP). F512 is a binding site for chloride. Residues 543 to 557 (GKYALMGAAAQLGGI) constitute an intramembrane region (helical). Residues 558–560 (VRM) constitute an intramembrane region (note=Loop between two helices). The helical intramembrane region spans 561–572 (TLSLTVIMMEAT). Positions 573–576 (SNVT) form an intramembrane region, note=Loop between two helices. A helical transmembrane segment spans residues 577–595 (YGFPIMLVLMTAKIVGDVF). Residues 596–803 (IEGLYDMHIQ…GLEELSLAQT (208 aa)) lie on the Cytoplasmic side of the membrane. Y600 contacts chloride. 2 consecutive CBS domains span residues 629–693 (MSTP…VFVE) and 739–797 (MNPS…GLEE). ATP contacts are provided by residues 656 to 658 (HNG) and 781 to 784 (TRKD). Position 799 is a phosphoserine (S799).

The protein belongs to the chloride channel (TC 2.A.49) family. ClC-7/CLCN7 subfamily. Chloride channel 7 are heteromers of alpha (CLCN7) and beta (OSTM1) subunits. Brain, testis, muscle and kidney.

It is found in the lysosome membrane. The enzyme catalyses 2 chloride(in) + H(+)(out) = 2 chloride(out) + H(+)(in). Its function is as follows. Slowly voltage-gated channel mediating the exchange of chloride ions against protons. Functions as antiporter and contributes to the acidification of the lysosome lumen and may be involved in maintaining lysosomal pH. The CLC channel family contains both chloride channels and proton-coupled anion transporters that exchange chloride or another anion for protons. The presence of conserved gating glutamate residues is typical for family members that function as antiporters. The polypeptide is H(+)/Cl(-) exchange transporter 7 (Clcn7) (Rattus norvegicus (Rat)).